The chain runs to 564 residues: MGSMEQQQPESAAPATEASPEIIFRSKLQDIAITNTLPLHRYCFERLPEVAARPCLIDGATGGVLTYADVDRLSRRLAAALRRAPLGLRRGGVVMSLLRNSPEFVLSFFAASRVGAAVTTANPMSTPHEIESQLAAAGATVVITESMAADKLPSHSHGALTVVLIDERRDGCLHFWDDLMSEDEASPLAGDEDDEKVFDPDDVVALPYSSGTTGLPKGVMLTHRSLSTSVAQQVDGENPNIGLHAGDVILCALPMFHIYSLNTIMMCGLRVGAAIVVMRRFDLAAMMDLVERHRVTIAPLVPPIVVAVAKSEAAAARDLSSVRMVLSGAAPMGKDIEDAFMAKLPGAVLGQGYGMTEAGPVLSMCLAFAKEPFKVKSGACGTVVRNAELKIIDPDTGKSLGRNLPGEICIRGQQIMKGYLNNPEATKNTIDAEGWLHTGDIGYVDDDDEIFIVDRLKEIIKYRGFQVAPAELEALLITHPSIADAAVVGKQIEPEIGEIPVAFVAKTEGSELSEDDVKQFVAKEVIYYKKIREVFFVDKIPKAPSGKILRKELRKQLQHLQQEA.

Positions 209, 210, 211, 212, 213, and 217 each coordinate ATP. The (E)-4-coumaroyl-AMP site is built by tyrosine 259 and threonine 263. Arginine 280 provides a ligand contact to CoA. The segment at 282–351 (DLAAMMDLVE…AKLPGAVLGQ (70 aa)) is SBD1. (E)-4-coumaroyl-AMP is bound by residues alanine 329, glutamine 351, glycine 352, threonine 356, and methionine 364. Positions 351, 352, and 356 each coordinate ATP. The segment at 352-419 (GYGMTEAGPV…IRGQQIMKGY (68 aa)) is SBD2. ATP-binding residues include aspartate 440 and arginine 455. 2 residues coordinate (E)-4-coumaroyl-AMP: lysine 457 and lysine 461. CoA-binding residues include arginine 463 and glycine 464. Lysine 547 contacts ATP.

It belongs to the ATP-dependent AMP-binding enzyme family. It depends on Mg(2+) as a cofactor. As to expression, expressed in roots, stems, leaf blades and leaf sheaths.

The catalysed reaction is (E)-ferulate + ATP + CoA = (E)-feruloyl-CoA + AMP + diphosphate. It carries out the reaction (E)-4-coumarate + ATP + CoA = (E)-4-coumaroyl-CoA + AMP + diphosphate. The enzyme catalyses (E)-cinnamate + ATP + CoA = (E)-cinnamoyl-CoA + AMP + diphosphate. It catalyses the reaction (E)-caffeate + ATP + CoA = (E)-caffeoyl-CoA + AMP + diphosphate. The catalysed reaction is (E)-ferulate + ATP + H(+) = (E)-feruloyl-AMP + diphosphate. It carries out the reaction (E)-feruloyl-AMP + CoA = (E)-feruloyl-CoA + AMP + H(+). The enzyme catalyses (E)-4-coumarate + ATP + H(+) = (E)-4-coumaroyl-AMP + diphosphate. It catalyses the reaction (E)-4-coumaroyl-AMP + CoA = (E)-4-coumaroyl-CoA + AMP + H(+). The catalysed reaction is (E)-caffeate + ATP + H(+) = (E)-caffeoyl-AMP + diphosphate. It carries out the reaction (E)-caffeoyl-AMP + CoA = (E)-caffeoyl-CoA + AMP + H(+). Its pathway is phytoalexin biosynthesis; 3,4',5-trihydroxystilbene biosynthesis; 3,4',5-trihydroxystilbene from trans-4-coumarate: step 1/2. Involved in the phenylpropanoid metabolism by mediating the activation of a number of hydroxycinnamates for the biosynthesis of monolignols and other phenolic secondary metabolites. Catalyzes the formation of CoA esters of cinnamate, 4-coumarate, caffeate and ferulate. Is more efficient with substrates in the following order: ferulate &gt; 4-coumarate &gt; cinnamate &gt; caffeate. Cannot convert sinapate to its corresponding CoA ester. Follows a two-step reaction mechanism, wherein the carboxylate substrate first undergoes adenylation by ATP, followed by a thioesterification in the presence of CoA to yield the final CoA thioester. This chain is 4-coumarate--CoA ligase 1, found in Oryza sativa subsp. japonica (Rice).